The sequence spans 172 residues: Type II secretion system protein H (172 aa).

Residues 1–6 (MRASRG) constitute a propeptide, leader sequence. The residue at position 7 (Phe-7) is an N-methylphenylalanine. Residues 7-27 (FTLIELMVVMVIISVLIGLAV) traverse the membrane as a helical segment.

The protein belongs to the GSP H family. In terms of assembly, type II secretion is composed of four main components: the outer membrane complex, the inner membrane complex, the cytoplasmic secretion ATPase and the periplasm-spanning pseudopilus. Forms the tip of the type II pseudopilus by interacting with XcpV, XcpW and XcpX. Interacts with core component XcpT. Post-translationally, cleaved by prepilin peptidase. Methylated by prepilin peptidase at the amino group of the N-terminal phenylalanine once the leader sequence is cleaved by prepilin peptidase.

It is found in the cell inner membrane. Its function is as follows. Component of the type II secretion system required for the energy-dependent secretion of extracellular factors such as proteases and toxins from the periplasm. Part of the pseudopilus tip complex that is critical for the recognition and binding of secretion substrates. Type II pseudopilus confers increased bacterial adhesive capabilities. This chain is Type II secretion system protein H (xcpU), found in Pseudomonas aeruginosa (strain ATCC 15692 / DSM 22644 / CIP 104116 / JCM 14847 / LMG 12228 / 1C / PRS 101 / PAO1).